The following is a 39-amino-acid chain: Conotoxin ArMSGL-013 (39 aa).

Positions 1-5 are excised as a propeptide; it reads RRSLT. Cystine bridges form between Cys12-Cys24, Cys16-Cys33, and Cys23-Cys37. Position 38 is a tryptophan amide (Trp38).

The protein belongs to the conotoxin O3 superfamily. As to expression, expressed by the venom duct.

It is found in the secreted. The chain is Conotoxin ArMSGL-013 from Conus arenatus (Sand-dusted cone).